Here is a 350-residue protein sequence, read N- to C-terminus: tRNA uridine(34) hydroxylase (350 aa).

A Rhodanese domain is found at 146 to 240 (DDPDALFIDM…YARKAREQGL (95 aa)). C200 (cysteine persulfide intermediate) is an active-site residue.

The protein belongs to the TrhO family.

The catalysed reaction is uridine(34) in tRNA + AH2 + O2 = 5-hydroxyuridine(34) in tRNA + A + H2O. Functionally, catalyzes oxygen-dependent 5-hydroxyuridine (ho5U) modification at position 34 in tRNAs, the first step in 5-carboxymethoxyuridine (cmo5U) biosynthesis. May be part of an alternate pathway, which is able to bypass cmo5U biogenesis in a subset of tRNAs under aerobic conditions. The polypeptide is tRNA uridine(34) hydroxylase (Escherichia coli O17:K52:H18 (strain UMN026 / ExPEC)).